Here is a 93-residue protein sequence, read N- to C-terminus: Large ribosomal subunit protein uL23cz/uL23cy (93 aa).

The protein belongs to the universal ribosomal protein uL23 family. In terms of assembly, part of the 50S ribosomal subunit.

It is found in the plastid. Its subcellular location is the chloroplast. Its function is as follows. Binds to 23S rRNA. The polypeptide is Large ribosomal subunit protein uL23cz/uL23cy (rpl23-A) (Nandina domestica (Heavenly bamboo)).